The chain runs to 416 residues: Pectin acetylesterase 10 (416 aa).

An N-terminal signal peptide occupies residues 1–20; the sequence is MRKLFLLGFIVAGLVLGNEA. An N-linked (GlcNAc...) asparagine glycan is attached at Asn27. Active-site charge relay system residues include Ser198, Asp294, and His361.

Belongs to the pectinacetylesterase family.

It localises to the secreted. Its subcellular location is the cell wall. Hydrolyzes acetyl esters in homogalacturonan regions of pectin. In type I primary cell wall, galacturonic acid residues of pectin can be acetylated at the O-2 and O-3 positions. Decreasing the degree of acetylation of pectin gels in vitro alters their physical properties. This Arabidopsis thaliana (Mouse-ear cress) protein is Pectin acetylesterase 10.